Reading from the N-terminus, the 171-residue chain is Large ribosomal subunit protein uL24 (171 aa).

A large ribosomal subunit protein uL24 region spans residues 1 to 124 (MNIKTGDTVV…AKPAKTKAEK (124 aa)). The segment at 108–171 (GQTLDKAAKP…SVQKKGASGK (64 aa)) is disordered. The tract at residues 125 to 171 (VEKAATSSTDKPAKVTKAAKEAKPVKAVKSQKVEKNTSVQKKGASGK) is unknown.

The protein belongs to the universal ribosomal protein uL24 family. Part of the 50S ribosomal subunit.

Its function is as follows. One of two assembly initiator proteins, it binds directly to the 5'-end of the 23S rRNA, where it nucleates assembly of the 50S subunit. In terms of biological role, one of the proteins that surrounds the polypeptide exit tunnel on the outside of the subunit. The protein is Large ribosomal subunit protein uL24 of Acholeplasma laidlawii (strain PG-8A).